Reading from the N-terminus, the 161-residue chain is Allophycocyanin subunit alpha-B (161 aa).

N4-methylasparagine is present on asparagine 71. Cysteine 81 contributes to the (2R,3E)-phycocyanobilin binding site.

The protein belongs to the phycobiliprotein family. In terms of assembly, heterohexamer of two alpha chains, one alpha-B chain and three beta chains. Post-translationally, contains one covalently linked phycocyanobilin chromophore. The chromophore is added by phycocyanobilin lyase CpcS 1.

It is found in the cellular thylakoid membrane. In terms of biological role, light-harvesting photosynthetic bile pigment-protein from the phycobiliprotein complex. Allophycocyanin has a maximum absorption at approximately 654 nanometers. This is Allophycocyanin subunit alpha-B (apcD) from Nostoc sp. (strain PCC 7120 / SAG 25.82 / UTEX 2576).